A 325-amino-acid polypeptide reads, in one-letter code: Aldo-keto reductase family 1 member A1 (325 aa).

Alanine 2 carries the N-acetylalanine modification. Serine 4 carries the phosphoserine modification. NADP(+)-binding positions include 11–20, threonine 21, and tryptophan 22; that span reads GQKMPLIGLG. Phosphoserine is present on serine 38. Aspartate 45 contributes to the NADP(+) binding site. Tyrosine 50 acts as the Proton donor in catalysis. An N6-acetyllysine; alternate modification is found at lysine 127. Lysine 127 carries the N6-succinyllysine; alternate modification. N6-succinyllysine is present on lysine 145. The NADP(+) site is built by serine 162, asparagine 163, serine 211, leucine 213, serine 215, serine 216, lysine 263, serine 264, isoleucine 265, threonine 266, arginine 269, glutamine 272, and asparagine 273. A Phosphoserine modification is found at serine 211.

The protein belongs to the aldo/keto reductase family.

Its subcellular location is the cytoplasm. The protein resides in the cytosol. It is found in the apical cell membrane. It carries out the reaction a primary alcohol + NADP(+) = an aldehyde + NADPH + H(+). The enzyme catalyses L-gulonate + NADP(+) = aldehydo-D-glucuronate + NADPH + H(+). It catalyses the reaction L-gulono-1,4-lactone + NADP(+) = D-glucurono-3,6-lactone + NADPH + H(+). The catalysed reaction is allyl alcohol + NADP(+) = acrolein + NADPH + H(+). It carries out the reaction glycerol + NADP(+) = D-glyceraldehyde + NADPH + H(+). The enzyme catalyses glycerol + NADP(+) = L-glyceraldehyde + NADPH + H(+). It catalyses the reaction hydroxyacetone + NADP(+) = methylglyoxal + NADPH + H(+). The catalysed reaction is 3-deoxyfructose + NADP(+) = 3-deoxyglucosone + NADPH + H(+). It carries out the reaction (R)-mevalonate + NADP(+) = (R)-mevaldate + NADPH + H(+). The enzyme catalyses pyridine 3-methanol + NADP(+) = pyridine-3-carbaldehyde + NADPH + H(+). It catalyses the reaction S-nitroso-CoA + NADPH + H(+) = sulfinamide-CoA + NADP(+). The catalysed reaction is S-nitrosoglutathione + NADPH + H(+) = S-(hydroxysulfenamide)glutathione + NADP(+). In terms of biological role, catalyzes the NADPH-dependent reduction of a wide variety of carbonyl-containing compounds to their corresponding alcohols. Displays enzymatic activity towards endogenous metabolites such as aromatic and aliphatic aldehydes, ketones, monosaccharides and bile acids, with a preference for negatively charged substrates, such as glucuronate and succinic semialdehyde. Functions as a detoxifiying enzyme by reducing a range of toxic aldehydes. Reduces methylglyoxal and 3-deoxyglucosone, which are present at elevated levels under hyperglycemic conditions and are cytotoxic. Involved also in the detoxification of lipid-derived aldehydes like acrolein. Plays a role in the activation of procarcinogens, such as polycyclic aromatic hydrocarbon trans-dihydrodiols, and in the metabolism of various xenobiotics and drugs. Also acts as an inhibitor of protein S-nitrosylation by mediating degradation of S-nitroso-coenzyme A (S-nitroso-CoA), a cofactor required to S-nitrosylate proteins. S-nitroso-CoA reductase activity is involved in reprogramming intermediary metabolism in renal proximal tubules, notably by inhibiting protein S-nitrosylation of isoform 2 of PKM (PKM2). Also acts as a S-nitroso-glutathione reductase by catalyzing the NADPH-dependent reduction of S-nitrosoglutathione. Displays no reductase activity towards retinoids. The protein is Aldo-keto reductase family 1 member A1 (AKR1A1) of Pongo abelii (Sumatran orangutan).